The following is a 237-amino-acid chain: Placenta-expressed transcript 1 protein (237 aa).

An N-terminal signal peptide occupies residues 1-27 (MLSLRSLLPHLGLFLCLALHLSPSLSA). Residues asparagine 30, asparagine 67, asparagine 103, and asparagine 136 are each glycosylated (N-linked (GlcNAc...) asparagine). The span at 145-162 (KMEQVQPSASTPIPESSE) shows a compositional bias: polar residues. Residues 145-170 (KMEQVQPSASTPIPESSETSQTINTT) are disordered. Serine 218 carries the GPI-anchor amidated serine lipid modification. A propeptide spans 219–237 (PLAGALHILLVFLISKLLF) (removed in mature form).

N-glycosylated. In terms of processing, GPI-anchored. In terms of tissue distribution, present in hair follicle cells and sebaceous gland of skin, ciliated epithelial cells of trachea and bronchial tube, striated portion of submandibular gland, distal convoluted tubule cells of kidney, ciliated epithelial cells of oviduct, medulla of adrenal gland and anterior lobe of pituitary gland. Expressed in keratinocytes of the hair follicle at the trichilemmal zone corresponding to the terminally differentiated outermost suprabasal outer root sheath (ORS), including that of the sebaceous gland duct (SGD) and the directly adjacent upper distal end of the companion layer (CL). Expression is similar in all hair follicle growth stages. Also detected during both the early and late anagen phases above the bulge of stem cells. Expressed at the leading edge of the epidermal wound. Not expressed in the interfollicular epidermis (IFE), inner root sheath (IRS) and hair fiber. Highly expressed in placenta. Detected in mammary and prostate epithelia and in the pancreas (at protein level).

It is found in the apical cell membrane. Its function is as follows. Modulates leading keratinocyte migration and cellular adhesion to matrix proteins during a wound-healing response and promotes wound repair. May play a role during trichilemmal differentiation of the hair follicle. This Mus musculus (Mouse) protein is Placenta-expressed transcript 1 protein (Plet1).